The sequence spans 67 residues: Preprofallaxidin-4 (67 aa).

An N-terminal signal peptide occupies residues 1 to 22; sequence MASLKKFLFLVLFLGMVSLSIC. Residues 23–46 constitute a propeptide that is removed on maturation; it reads DKEKREGENEEEEEEHEEESEEKR. The interval 24–48 is disordered; that stretch reads KEKREGENEEEEEEHEEESEEKRGL. Positions 30-42 are enriched in acidic residues; it reads ENEEEEEEHEEES.

This sequence belongs to the frog skin active peptide (FSAP) family. Dermaseptin subfamily. As to expression, expressed by the skin glands.

The protein localises to the secreted. This chain is Preprofallaxidin-4, found in Litoria fallax (Eastern dwarf tree frog).